A 746-amino-acid chain; its full sequence is NAD(P)H-quinone oxidoreductase subunit 5, chloroplastic (746 aa).

The next 16 membrane-spanning stretches (helical) occupy residues 9-29 (WIIP…LLLF), 40-60 (WTFL…YLSI), 89-109 (IDPL…LVLI), 125-145 (FAYM…SNLI), 147-167 (VYFF…FWFT), 185-205 (GDFG…SFEF), 221-241 (VNLL…IAKS), 258-278 (TPIS…FLVA), 280-300 (LLPL…IGII), 327-347 (LGYM…FHLI), 354-374 (ALLF…VGYS), 396-416 (IAFL…CFWS), 425-445 (LLFS…TAFY), 547-567 (ILFP…IGIP), 608-628 (FSVS…KPFY), and 723-743 (YLFL…FFYF).

It belongs to the complex I subunit 5 family. NDH is composed of at least 16 different subunits, 5 of which are encoded in the nucleus.

It localises to the plastid. The protein resides in the chloroplast thylakoid membrane. The enzyme catalyses a plastoquinone + NADH + (n+1) H(+)(in) = a plastoquinol + NAD(+) + n H(+)(out). It catalyses the reaction a plastoquinone + NADPH + (n+1) H(+)(in) = a plastoquinol + NADP(+) + n H(+)(out). In terms of biological role, NDH shuttles electrons from NAD(P)H:plastoquinone, via FMN and iron-sulfur (Fe-S) centers, to quinones in the photosynthetic chain and possibly in a chloroplast respiratory chain. The immediate electron acceptor for the enzyme in this species is believed to be plastoquinone. Couples the redox reaction to proton translocation, and thus conserves the redox energy in a proton gradient. This chain is NAD(P)H-quinone oxidoreductase subunit 5, chloroplastic (ndhF), found in Nasturtium officinale (Watercress).